The sequence spans 518 residues: Protein nucleotidyltransferase YdiU (518 aa).

The span at 1-10 shows a compositional bias: basic and acidic residues; it reads MTHLRFDNRL. Positions 1–23 are disordered; it reads MTHLRFDNRLRQQLPGDPEEGSR. ATP-binding residues include Gly-100, Gly-102, Arg-103, Lys-123, Asp-135, Gly-136, Arg-193, and Arg-200. The Proton acceptor role is filled by Asp-270. Mg(2+) contacts are provided by Asn-271 and Asp-280. Asp-280 serves as a coordination point for ATP.

Belongs to the SELO family. Mg(2+) serves as cofactor. Requires Mn(2+) as cofactor.

The catalysed reaction is L-seryl-[protein] + ATP = 3-O-(5'-adenylyl)-L-seryl-[protein] + diphosphate. It catalyses the reaction L-threonyl-[protein] + ATP = 3-O-(5'-adenylyl)-L-threonyl-[protein] + diphosphate. The enzyme catalyses L-tyrosyl-[protein] + ATP = O-(5'-adenylyl)-L-tyrosyl-[protein] + diphosphate. It carries out the reaction L-histidyl-[protein] + UTP = N(tele)-(5'-uridylyl)-L-histidyl-[protein] + diphosphate. The catalysed reaction is L-seryl-[protein] + UTP = O-(5'-uridylyl)-L-seryl-[protein] + diphosphate. It catalyses the reaction L-tyrosyl-[protein] + UTP = O-(5'-uridylyl)-L-tyrosyl-[protein] + diphosphate. Its function is as follows. Nucleotidyltransferase involved in the post-translational modification of proteins. It can catalyze the addition of adenosine monophosphate (AMP) or uridine monophosphate (UMP) to a protein, resulting in modifications known as AMPylation and UMPylation. This Xanthomonas axonopodis pv. citri (strain 306) protein is Protein nucleotidyltransferase YdiU.